The sequence spans 126 residues: Large ribosomal subunit protein bL20c (126 aa).

Belongs to the bacterial ribosomal protein bL20 family.

Its subcellular location is the plastid. The protein resides in the chloroplast. Binds directly to 23S ribosomal RNA and is necessary for the in vitro assembly process of the 50S ribosomal subunit. It is not involved in the protein synthesizing functions of that subunit. The protein is Large ribosomal subunit protein bL20c of Lactuca sativa (Garden lettuce).